A 721-amino-acid chain; its full sequence is Oviduct-specific glycoprotein (721 aa).

Residues 1 to 21 (MGRLLLLAGLVLLMKHSDGTA) form the signal peptide. Residues 22-385 (YKLVCYFTNW…HILNELLVQT (364 aa)) enclose the GH18 domain. A disulfide bond links Cys-26 and Cys-51. Residues 71 to 72 (LQ), 98 to 101 (GGWN), Tyr-142, 211 to 214 (LSYD), and Trp-355 each bind chitin. N-linked (GlcNAc...) asparagine glycosylation is found at Asn-402 and Asn-442. Polar residues predominate over residues 444–456 (TTVPSDGSVTPGG). The interval 444 to 465 (TTVPSDGSVTPGGTASPRKHAV) is disordered. N-linked (GlcNAc...) asparagine glycosylation occurs at Asn-469. 21 consecutive repeat copies span residues 486-492 (SKTTTGV), 493-499 (SKTTTGI), 500-506 (SKTTTGV), 507-513 (SKTTTGV), 514-520 (SKATAGI), 521-527 (SKTIPEI), 528-534 (SKATAGV), 535-541 (SKTTTGV), 542-548 (SKTTTGI), 549-555 (SKTITGV), 556-562 (SKTTTGI), 563-569 (SKTTTGI), 570-576 (SKTTTGV), 577-583 (SKITTGV), 584-590 (SKTTTGI), 591-597 (SKTTTGI), 598-604 (SQTTTGI), 605-611 (SKTTTDI), 612-618 (SKTTTGI), 619-625 (SKTTPGI), and 626-632 (SKTTPGM). The tract at residues 486–632 (SKTTTGVSKT…PGISKTTPGM (147 aa)) is 21 X 7 AA tandem repeats of S-K-[TAI]-[TI]-[TAP]-[GED]-[IVM].

Belongs to the glycosyl hydrolase 18 family. In terms of tissue distribution, epithelial cells of the oviduct.

It is found in the cytoplasmic vesicle. It localises to the secretory vesicle. Functionally, binds to oocyte zona pellucida in vivo. May play a role in the fertilization process and/or early embryonic development. In Mus musculus (Mouse), this protein is Oviduct-specific glycoprotein (Ovgp1).